The chain runs to 463 residues: Nicotinate phosphoribosyltransferase pncB2 (463 aa).

His-202 bears the Phosphohistidine mark.

The protein belongs to the NAPRTase family. Transiently phosphorylated on a His residue during the reaction cycle. Phosphorylation strongly increases the affinity for substrates and increases the rate of nicotinate D-ribonucleotide production. Dephosphorylation regenerates the low-affinity form of the enzyme, leading to product release.

It catalyses the reaction nicotinate + 5-phospho-alpha-D-ribose 1-diphosphate + ATP + H2O = nicotinate beta-D-ribonucleotide + ADP + phosphate + diphosphate. Its pathway is cofactor biosynthesis; NAD(+) biosynthesis; nicotinate D-ribonucleotide from nicotinate: step 1/1. Functionally, involved in the Preiss-Handler pathway, which is a recycling route that permits the salvage of free nicotinamide (NM) and nicotinic acid (Na) involved in the NAD biosynthesis. Catalyzes the synthesis of beta-nicotinate D-ribonucleotide from nicotinate and 5-phospho-D-ribose 1-phosphate at the expense of ATP. It is not able to use nicotinamide. PncB2 appears to be responsible for the increased salvage synthesis of NAD during infection of host tissues. The sequence is that of Nicotinate phosphoribosyltransferase pncB2 (pncB2) from Mycobacterium tuberculosis (strain CDC 1551 / Oshkosh).